A 365-amino-acid chain; its full sequence is Metallophosphoesterase 1 homolog (365 aa).

The chain crosses the membrane as a helical span at residues P10–F30. Positions 54, 96, 132, 208, 262, and 264 each coordinate a divalent metal cation. Residues I319–L339 traverse the membrane as a helical segment.

Belongs to the metallophosphoesterase superfamily. MPPE1 family. Requires Mn(2+) as cofactor.

The protein resides in the endoplasmic reticulum-Golgi intermediate compartment membrane. It localises to the golgi apparatus. The protein localises to the cis-Golgi network membrane. In terms of biological role, metallophosphoesterase required for transport of GPI-anchor proteins from the endoplasmic reticulum to the Golgi. Acts in lipid remodeling steps of GPI-anchor maturation by mediating the removal of a side-chain ethanolamine-phosphate (EtNP) from the second Man (Man2) of the GPI intermediate, an essential step for efficient transport of GPI-anchor proteins. In Caenorhabditis elegans, this protein is Metallophosphoesterase 1 homolog.